We begin with the raw amino-acid sequence, 89 residues long: Small ribosomal subunit protein uS15 (89 aa).

The segment covering Met1–Val11 has biased composition (basic and acidic residues). The segment at Met1–Pro25 is disordered.

It belongs to the universal ribosomal protein uS15 family. In terms of assembly, part of the 30S ribosomal subunit. Forms a bridge to the 50S subunit in the 70S ribosome, contacting the 23S rRNA.

In terms of biological role, one of the primary rRNA binding proteins, it binds directly to 16S rRNA where it helps nucleate assembly of the platform of the 30S subunit by binding and bridging several RNA helices of the 16S rRNA. Its function is as follows. Forms an intersubunit bridge (bridge B4) with the 23S rRNA of the 50S subunit in the ribosome. This Nitrobacter winogradskyi (strain ATCC 25391 / DSM 10237 / CIP 104748 / NCIMB 11846 / Nb-255) protein is Small ribosomal subunit protein uS15.